The primary structure comprises 219 residues: Adenylate kinase (219 aa).

10-15 (GAGKGT) contacts ATP. The NMP stretch occupies residues 30 to 59 (STGDMLRAAVKAGTPLGQQAKKVMDAGELV). Residues threonine 31, arginine 36, 57–59 (ELV), 85–88 (GFPR), and glutamine 92 each bind AMP. An LID region spans residues 122–159 (GRRVHPGSGRVYHVEHNPPKEEGKDDVTGEPLVQRDDD). ATP contacts are provided by residues arginine 123 and 132 to 133 (VY). The interval 129–152 (SGRVYHVEHNPPKEEGKDDVTGEP) is disordered. Residues 133–152 (YHVEHNPPKEEGKDDVTGEP) show a composition bias toward basic and acidic residues. AMP-binding residues include arginine 156 and arginine 167. Glycine 203 serves as a coordination point for ATP.

Belongs to the adenylate kinase family. In terms of assembly, monomer.

It localises to the cytoplasm. The catalysed reaction is AMP + ATP = 2 ADP. It participates in purine metabolism; AMP biosynthesis via salvage pathway; AMP from ADP: step 1/1. Catalyzes the reversible transfer of the terminal phosphate group between ATP and AMP. Plays an important role in cellular energy homeostasis and in adenine nucleotide metabolism. In Alkalilimnicola ehrlichii (strain ATCC BAA-1101 / DSM 17681 / MLHE-1), this protein is Adenylate kinase.